Reading from the N-terminus, the 196-residue chain is Carnitine operon protein CaiE (196 aa).

Positions 173–196 are disordered; sequence TQPLRQMEENRPRLQGTTDVTPKR. A compositionally biased stretch (polar residues) spans 187 to 196; that stretch reads QGTTDVTPKR.

The protein belongs to the transferase hexapeptide repeat family.

It functions in the pathway amine and polyamine metabolism; carnitine metabolism. Its function is as follows. Overproduction of CaiE stimulates the activity of CaiB and CaiD. The protein is Carnitine operon protein CaiE of Escherichia coli O157:H7.